A 169-amino-acid polypeptide reads, in one-letter code: Probable chorismate pyruvate-lyase (169 aa).

Residues Arg-71, Ile-110, and Glu-150 each coordinate substrate.

The protein belongs to the UbiC family.

It localises to the cytoplasm. It catalyses the reaction chorismate = 4-hydroxybenzoate + pyruvate. It participates in cofactor biosynthesis; ubiquinone biosynthesis. Removes the pyruvyl group from chorismate, with concomitant aromatization of the ring, to provide 4-hydroxybenzoate (4HB) for the ubiquinone pathway. This is Probable chorismate pyruvate-lyase from Acinetobacter baumannii (strain ATCC 17978 / DSM 105126 / CIP 53.77 / LMG 1025 / NCDC KC755 / 5377).